A 212-amino-acid chain; its full sequence is Small ribosomal subunit protein eS1 (212 aa).

It belongs to the eukaryotic ribosomal protein eS1 family.

This is Small ribosomal subunit protein eS1 from Staphylothermus marinus (strain ATCC 43588 / DSM 3639 / JCM 9404 / F1).